The chain runs to 122 residues: Large ribosomal subunit protein uL18 (122 aa).

Belongs to the universal ribosomal protein uL18 family. Part of the 50S ribosomal subunit; part of the 5S rRNA/L5/L18/L25 subcomplex. Contacts the 5S and 23S rRNAs.

Its function is as follows. This is one of the proteins that bind and probably mediate the attachment of the 5S RNA into the large ribosomal subunit, where it forms part of the central protuberance. This chain is Large ribosomal subunit protein uL18, found in Syntrophotalea carbinolica (strain DSM 2380 / NBRC 103641 / GraBd1) (Pelobacter carbinolicus).